We begin with the raw amino-acid sequence, 165 residues long: uncharacterized protein (165 aa).

This is an uncharacterized protein from Acanthamoeba polyphaga mimivirus (APMV).